We begin with the raw amino-acid sequence, 351 residues long: Anthranilate phosphoribosyltransferase (351 aa).

5-phospho-alpha-D-ribose 1-diphosphate is bound by residues Gly80, 83–84, Thr88, 90–93, 108–116, and Ser120; these read GD, NIST, and KHGNRSVTS. Position 80 (Gly80) interacts with anthranilate. Ser92 provides a ligand contact to Mg(2+). Position 111 (Asn111) interacts with anthranilate. Residue Arg166 coordinates anthranilate. Mg(2+) contacts are provided by Asp229 and Glu230.

The protein belongs to the anthranilate phosphoribosyltransferase family. As to quaternary structure, homodimer. Mg(2+) is required as a cofactor.

The enzyme catalyses N-(5-phospho-beta-D-ribosyl)anthranilate + diphosphate = 5-phospho-alpha-D-ribose 1-diphosphate + anthranilate. The protein operates within amino-acid biosynthesis; L-tryptophan biosynthesis; L-tryptophan from chorismate: step 2/5. Catalyzes the transfer of the phosphoribosyl group of 5-phosphorylribose-1-pyrophosphate (PRPP) to anthranilate to yield N-(5'-phosphoribosyl)-anthranilate (PRA). The polypeptide is Anthranilate phosphoribosyltransferase (Chlorobium phaeovibrioides (strain DSM 265 / 1930) (Prosthecochloris vibrioformis (strain DSM 265))).